A 348-amino-acid polypeptide reads, in one-letter code: D-erythrose-4-phosphate dehydrogenase (348 aa).

NAD(+) contacts are provided by residues 12–13 (RI) and Arg-81. Substrate contacts are provided by residues 154-156 (SCT), Arg-200, 213-214 (TK), and Arg-236. The active-site Nucleophile is the Cys-155. NAD(+) is bound at residue Asn-318.

Belongs to the glyceraldehyde-3-phosphate dehydrogenase family. Epd subfamily. In terms of assembly, homotetramer.

It localises to the cytoplasm. The catalysed reaction is D-erythrose 4-phosphate + NAD(+) + H2O = 4-phospho-D-erythronate + NADH + 2 H(+). It functions in the pathway cofactor biosynthesis; pyridoxine 5'-phosphate biosynthesis; pyridoxine 5'-phosphate from D-erythrose 4-phosphate: step 1/5. Functionally, catalyzes the NAD-dependent conversion of D-erythrose 4-phosphate to 4-phosphoerythronate. This Salmonella paratyphi A (strain ATCC 9150 / SARB42) protein is D-erythrose-4-phosphate dehydrogenase.